Reading from the N-terminus, the 445-residue chain is Chromosomal replication initiator protein DnaA (445 aa).

Residues methionine 1–lysine 73 are domain I, interacts with DnaA modulators. Positions lysine 73–threonine 106 are domain II. A domain III, AAA+ region region spans residues methionine 107–serine 323. Glycine 151, glycine 153, lysine 154, and threonine 155 together coordinate ATP. The tract at residues serine 324–lysine 445 is domain IV, binds dsDNA.

The protein belongs to the DnaA family. Oligomerizes as a right-handed, spiral filament on DNA at oriC.

The protein resides in the cytoplasm. Its function is as follows. Plays an essential role in the initiation and regulation of chromosomal replication. ATP-DnaA binds to the origin of replication (oriC) to initiate formation of the DNA replication initiation complex once per cell cycle. Binds the DnaA box (a 9 base pair repeat at the origin) and separates the double-stranded (ds)DNA. Forms a right-handed helical filament on oriC DNA; dsDNA binds to the exterior of the filament while single-stranded (ss)DNA is stabiized in the filament's interior. The ATP-DnaA-oriC complex binds and stabilizes one strand of the AT-rich DNA unwinding element (DUE), permitting loading of DNA polymerase. After initiation quickly degrades to an ADP-DnaA complex that is not apt for DNA replication. Binds acidic phospholipids. This is Chromosomal replication initiator protein DnaA from Clostridium botulinum (strain Loch Maree / Type A3).